The following is a 198-amino-acid chain: Pre-histone-like nucleoprotein (198 aa).

Ser-2 is subject to N-acetylserine; by host. Residues 2-24 (SILISPSNNTGWGLRFPSKMFGG) constitute a propeptide that is removed on maturation. The segment at 24–55 (GAKKRSDQHPVRVRGHYRAPWGAHKRGRTGRT) is disordered. 2 positions are modified to N6-acetyllysine; by host: Lys-27 and Lys-48. Residues 34–52 (VRVRGHYRAPWGAHKRGRT) show a composition bias toward basic residues. Phosphothreonine; by host is present on residues Thr-55 and Thr-74. Phosphoserine; by host occurs at positions 183 and 185. The Nuclear localization signal motif lies at 188–198 (RVPVRTRPPRN).

The protein belongs to the adenoviridae histone-like nucleoprotein family. Interacts with the core-capsid bridging protein; this interaction bridges the virus core to the capsid. Interacts with host NPM1; this interaction might play a role in placing the pre-histone-like nucleoprotein on the viral DNA or regulating viral gene expression. Interacts with host HMGB1; this interaction inhibits host immune response. Post-translationally, cleaved near the N-terminus by the viral protease during virion maturation to form the mature protein.

It localises to the virion. The protein resides in the host nucleus. Its subcellular location is the host nucleolus. In terms of biological role, plays a role in the inhibition of host immune response within the nucleus. Interacts with cellular nucleosomes and immobilizes the host immune danger signal HMGB1 on chromatin. In turn, prevents HMGB1 release out of the cell and thus decreases inflammation. Also plays a role in the wrapping and condensation of the viral DNA. May also promote viral genome import into the nucleus. The polypeptide is Pre-histone-like nucleoprotein (Human adenovirus C serotype 2 (HAdV-2)).